The sequence spans 96 residues: MKLRPLHDRVVIRRLEEEQKTAGGIIIPDTAKEKPVRGEIVAAGHGKILEDGKVRALDVKTGDQVLFAKYAGTEIKVEGEELLVMREDDIMAVIEK.

The protein belongs to the GroES chaperonin family. In terms of assembly, heptamer of 7 subunits arranged in a ring. Interacts with the chaperonin GroEL.

The protein localises to the cytoplasm. Functionally, together with the chaperonin GroEL, plays an essential role in assisting protein folding. The GroEL-GroES system forms a nano-cage that allows encapsulation of the non-native substrate proteins and provides a physical environment optimized to promote and accelerate protein folding. GroES binds to the apical surface of the GroEL ring, thereby capping the opening of the GroEL channel. The polypeptide is Co-chaperonin GroES (Acidithiobacillus ferrooxidans (strain ATCC 23270 / DSM 14882 / CIP 104768 / NCIMB 8455) (Ferrobacillus ferrooxidans (strain ATCC 23270))).